A 403-amino-acid chain; its full sequence is Farnesyl pyrophosphate synthase (403 aa).

Mg(2+) contacts are provided by aspartate 156 and aspartate 160. The DDXXD motif signature appears at 156–160 (DDLAD).

The protein belongs to the FPP/GGPP synthase family. Requires Mg(2+) as cofactor.

The enzyme catalyses isopentenyl diphosphate + (2E)-geranyl diphosphate = (2Z,6E)-farnesyl diphosphate + diphosphate. It functions in the pathway pheromone biosynthesis. Functionally, farnesyl pyrophosphate synthase involved in pheromone biosynthesis by catalyzing the formation of (2Z,6E)-farnesyl diphosphate. The protein is Farnesyl pyrophosphate synthase of Nezara viridula (Southern green stink bug).